The primary structure comprises 445 residues: MKIFGTDGVRGKAGVKLTPMFVMRLGIAAGLYFKKHSQTNKILIGKDTRKSGYMVENALVSALTSIGYNVIQIGPMPTPAIAFLTEDMRCDAGIMISASHNPFEDNGIKFFNSYGYKLKEEEEKAIEEIFHDEGLLHSSYKVGESVGSAKRIDDVIGRYIVHLKHSFPKHLNLQSLRIVLDTANGAAYKVAPVVFSELGADVLVINDEPNGCNINEQCGALHPNQLSQEVKKYRADLGFAFDGDADRLVVVDNLGNIVHGDKLLGVLGVYQKSKNALSSQAIVATNMSNLALKEYLKSQDLELKHCAIGDKFVSECMRLNKANFGGEQSGHIIFSDYAKTGDGLVCALQVSALVLESKQVSSVALNPFELYPQNLVNLNVQKKPPLESLKGYSALLKELDQLEIRHLIRYSGTENKLRILLEAKDEKLLESKMQELKEFFEGHLC.

Catalysis depends on Ser99, which acts as the Phosphoserine intermediate. Mg(2+) contacts are provided by Ser99, Asp242, Asp244, and Asp246. Ser99 is modified (phosphoserine).

It belongs to the phosphohexose mutase family. Mg(2+) serves as cofactor. Activated by phosphorylation.

The catalysed reaction is alpha-D-glucosamine 1-phosphate = D-glucosamine 6-phosphate. Functionally, catalyzes the conversion of glucosamine-6-phosphate to glucosamine-1-phosphate. The sequence is that of Phosphoglucosamine mutase from Helicobacter pylori (strain HPAG1).